A 194-amino-acid polypeptide reads, in one-letter code: Probable thymidylate kinase (194 aa).

8-15 (GIDGSGKT) is an ATP binding site.

It belongs to the thymidylate kinase family.

The enzyme catalyses dTMP + ATP = dTDP + ADP. This is Probable thymidylate kinase from Sulfolobus acidocaldarius (strain ATCC 33909 / DSM 639 / JCM 8929 / NBRC 15157 / NCIMB 11770).